Reading from the N-terminus, the 325-residue chain is Pseudouridylate synthase TRUB2, mitochondrial (325 aa).

Aspartate 101 serves as the catalytic Nucleophile. The disordered stretch occupies residues 292–325 (QTEGVSRGNPDREAAEGPIPGPSRGAEGEGELRA).

The protein belongs to the pseudouridine synthase TruB family.

The protein resides in the mitochondrion matrix. The enzyme catalyses a uridine in mRNA = a pseudouridine in mRNA. It catalyses the reaction uridine(55) in tRNA = pseudouridine(55) in tRNA. Functionally, minor enzyme contributing to the isomerization of uridine to pseudouridine (pseudouridylation) of specific mitochondrial mRNAs (mt-mRNAs) such as COXI and COXIII mt-mRNAs, modulating the efficiency of mitochondrial protein synthesis without changes in transcript abundance or stability. Also catalyzes pseudouridylation of some tRNAs, including synthesis of pseudouridine(55) from uracil-55, in the psi GC loop of a subset of tRNAs. The polypeptide is Pseudouridylate synthase TRUB2, mitochondrial (Xenopus tropicalis (Western clawed frog)).